A 181-amino-acid chain; its full sequence is Dehydration-responsive element-binding protein 1E (181 aa).

Residues 14-26 (KKRAGRRIFKETR) carry the Nuclear localization signal motif. The AP2/ERF DNA-binding region spans 29 to 86 (IYRGVRRRDGDKWVCEVREPIHQRRVWLGTYPTADMAARAHDVAVLALRGRSACLNFS).

Belongs to the AP2/ERF transcription factor family. ERF subfamily.

Its subcellular location is the nucleus. Its function is as follows. Transcriptional activator that binds specifically to the DNA sequence 5'-[AG]CCGAC-3'. Binding to the C-repeat/DRE element mediates cold or dehydration-inducible transcription. CBF/DREB1 factors play a key role in freezing tolerance and cold acclimation. This is Dehydration-responsive element-binding protein 1E (DREB1E) from Arabidopsis thaliana (Mouse-ear cress).